Here is a 122-residue protein sequence, read N- to C-terminus: Small ribosomal subunit protein bS6 (122 aa).

Belongs to the bacterial ribosomal protein bS6 family.

Its function is as follows. Binds together with bS18 to 16S ribosomal RNA. The chain is Small ribosomal subunit protein bS6 from Vibrio cholerae serotype O1 (strain ATCC 39541 / Classical Ogawa 395 / O395).